The sequence spans 730 residues: MAPKSKKAPSKKKMTKAERLRLMQEEEERRLKEEEEARLKFEKEEQERLEIQRIEREKWNLLEKKDLERRSQELEELALLEGCFPEAEKQKREIRALAQWKHYTECDGSPDPWVAQEMNTFISLWEEEKNQAFEQVMEKSKLVLSLIEKVKLILLETPTYELDHRTVLQHQGSILRLQELLSLKINVATELLLRQASNLADLDTGNMEKIIKDENVTLYVWANLKKNPRHRSVRFSETQIGFEIPRILATSNVALRLLHTRYDHITPLFPIAVTEQNQNPVGAEQVNVEESTEKAMTEEKLFTEEKAANEDEQPKAEQERELNLVQEENKYEAIENTVLQRTSDSEGEDSQTTQLELEMKLLSEAVLAAQLCLVENVVELPEASQAYKVDLCHFSTLGGVYHLDVLELPPQCKPVKGWVLVEILQEGLQRFIYPPDTTEEPDPDVTFPPIEVTLEIHKSVIFFERPRVVRWDNEGKFWRSDGISSVYYNREDRLLTFSMDTLGPVTLIQDAHVNMPYQSWEMSPCGMNKVLLIVKTVFMELQIYIKENLCMLASVKLRGKGLEFHLKGKWMAPIPFILALKEAGLNIFPAVYSHFYVVINNKVPQVELKAYRQMALLSSAFSFGWSKWNMVCNSTRVVIRVREQLSEETEHHTWSLLMFSGDRAQMLKMQEENDKFSEALREGTEFHSTLYHMMKDFASPVAMERVRHSNCQFIDSVCYMLLSIRVLSYS.

Positions 1–14 (MAPKSKKAPSKKKM) are enriched in basic residues. The disordered stretch occupies residues 1–20 (MAPKSKKAPSKKKMTKAERL).

This sequence belongs to the DNAI7 family. As to quaternary structure, part of the multisubunit axonemal dynein complex formed at least of two heavy chains and a number of intermediate and light chains. Interacts with tubulin. Associates with microtubule. Ubiquitinated. Ubiquitination leads to its degradation through the 26S proteasome. Ubiquitin-proteasome-mediated DNAI7 degradation occurs in mitosis. High expressed in lung, kidney, and testis.

It localises to the cell projection. It is found in the cilium. The protein localises to the cytoplasm. Functionally, via its association with the multisubunit axonemal dynein complex, is potentially involved in the regulation of cilia function. May also act as a cell cycle regulator. The sequence is that of Dynein axonemal intermediate chain 7 (Dnai7) from Mus musculus (Mouse).